Reading from the N-terminus, the 432-residue chain is Enolase (432 aa).

Glutamine 163 is a binding site for (2R)-2-phosphoglycerate. The active-site Proton donor is the glutamate 205. Positions 242, 287, and 314 each coordinate Mg(2+). (2R)-2-phosphoglycerate contacts are provided by lysine 339, arginine 368, serine 369, and lysine 390. The active-site Proton acceptor is lysine 339.

This sequence belongs to the enolase family. Mg(2+) is required as a cofactor.

The protein localises to the cytoplasm. It is found in the secreted. The protein resides in the cell surface. It catalyses the reaction (2R)-2-phosphoglycerate = phosphoenolpyruvate + H2O. It functions in the pathway carbohydrate degradation; glycolysis; pyruvate from D-glyceraldehyde 3-phosphate: step 4/5. Its function is as follows. Catalyzes the reversible conversion of 2-phosphoglycerate (2-PG) into phosphoenolpyruvate (PEP). It is essential for the degradation of carbohydrates via glycolysis. This chain is Enolase, found in Myxococcus xanthus (strain DK1622).